The primary structure comprises 544 residues: Transcription factor bHLH119 (544 aa).

Disordered stretches follow at residues 12–59 (NGQV…QPPR) and 185–208 (VASTSATRPQSSASLAPTPPPPSV). Positions 15-29 (VVRTSQPQRPSSGKP) are enriched in polar residues. Positions 50 to 59 (LPLPLLQPPR) are enriched in pro residues. Threonine 269 carries the phosphothreonine modification. At serine 274 the chain carries Phosphoserine. Disordered regions lie at residues 342 to 364 (QGTEEAHGSTSRKRSRAADMHNL) and 522 to 544 (QPPLPLQGQPTSQPSFSHASTSK). The bHLH domain maps to 357-406 (RAADMHNLSERRRRERINERMKTLQELLPRCRKTDKVSMLEDVIEYVKSL). The span at 522–535 (QPPLPLQGQPTSQP) shows a compositional bias: low complexity. Residues serine 541 and serine 543 each carry the phosphoserine modification.

As to quaternary structure, homodimer.

The protein resides in the nucleus. The sequence is that of Transcription factor bHLH119 (BHLH119) from Arabidopsis thaliana (Mouse-ear cress).